Consider the following 111-residue polypeptide: uncharacterized protein (111 aa).

The protein to A.fulgidus AF1864.

This is an uncharacterized protein from Aquifex aeolicus (strain VF5).